The following is an 880-amino-acid chain: DNA gyrase subunit A (880 aa).

The Topo IIA-type catalytic domain maps to 35–530 (LPDVRDGLKP…ASGDIDLEDL (496 aa)). Tyrosine 123 (O-(5'-phospho-DNA)-tyrosine intermediate) is an active-site residue. The GyrA-box motif lies at 557-563 (QRRGGKG).

This sequence belongs to the type II topoisomerase GyrA/ParC subunit family. In terms of assembly, heterotetramer, composed of two GyrA and two GyrB chains. In the heterotetramer, GyrA contains the active site tyrosine that forms a transient covalent intermediate with DNA, while GyrB binds cofactors and catalyzes ATP hydrolysis.

It localises to the cytoplasm. The enzyme catalyses ATP-dependent breakage, passage and rejoining of double-stranded DNA.. Its function is as follows. A type II topoisomerase that negatively supercoils closed circular double-stranded (ds) DNA in an ATP-dependent manner to modulate DNA topology and maintain chromosomes in an underwound state. Negative supercoiling favors strand separation, and DNA replication, transcription, recombination and repair, all of which involve strand separation. Also able to catalyze the interconversion of other topological isomers of dsDNA rings, including catenanes and knotted rings. Type II topoisomerases break and join 2 DNA strands simultaneously in an ATP-dependent manner. The chain is DNA gyrase subunit A from Haemophilus influenzae (strain ATCC 51907 / DSM 11121 / KW20 / Rd).